The chain runs to 294 residues: Dolichol-phosphate mannosyltransferase (294 aa).

The interval 1–27 is disordered; it reads MSIALDMDASAKMRKQPGSSGWSTSST. Residues 1 to 263 are Cytoplasmic-facing; it reads MSIALDMDAS…QQLVELYRFR (263 aa). A compositionally biased stretch (low complexity) spans 17 to 27; it reads PGSSGWSTSST. Residues P35, E39, V70, D72, D123, A124, D125, Q127, R151, K211, R237, and K243 each contribute to the GDP-alpha-D-mannose site. Positions 125 and 127 each coordinate Mg(2+). Mn(2+) is bound by residues D125 and Q127. A helical membrane pass occupies residues 264-284; that stretch reads FGTVPIVFVLIVLLVLALYIW. Residues 285–294 lie on the Lumenal side of the membrane; it reads SHVLAPMLGA.

The protein belongs to the glycosyltransferase 2 family. The cofactor is Mg(2+). Requires Mn(2+) as cofactor. Ca(2+) is required as a cofactor.

The protein resides in the endoplasmic reticulum membrane. The enzyme catalyses a di-trans,poly-cis-dolichyl phosphate + GDP-alpha-D-mannose = a di-trans,poly-cis-dolichyl beta-D-mannosyl phosphate + GDP. It functions in the pathway protein modification; protein glycosylation. Transfers mannose from GDP-mannose to dolichol monophosphate to form dolichol phosphate mannose (Dol-P-Man) which is the mannosyl donor in pathways leading to N-glycosylation, glycosyl phosphatidylinositol membrane anchoring, and O-mannosylation of proteins. The protein is Dolichol-phosphate mannosyltransferase (DPM1) of Mycosarcoma maydis (Corn smut fungus).